The following is a 585-amino-acid chain: Glucose oxidase-like protein fsoC (585 aa).

A104 serves as a coordination point for FAD. H521 serves as the catalytic Proton donor. Residue H564 is the Proton acceptor of the active site.

This sequence belongs to the GMC oxidoreductase family. Monomer. The cofactor is FAD.

Functionally, glucose oxidase-like protein; part of the gene cluster that mediates the biosynthesis of the enfumafungin-type antibiotic fuscoatroside. Four enzymes are sufficient to produce fuscoatroside: the terpene cyclase-glycosyl transferase fusion protein fsoAthe cytochrome P450 monoxygenases fsoD and fsoE, and the acetyltransferase fsoF; the cytochrome P450 monooxygenase fsoB and the glucose oxidase-like protein fsoC do not seem to play a role in biosynthesis of fuscoatroside. Glucose oxidase; part of the gene cluster that mediates the biosynthesis of the enfumafungin-type antibiotic, fuscoatroside. This Humicola fuscoatra protein is Glucose oxidase-like protein fsoC.